The sequence spans 452 residues: Na(+)/H(+) antiporter NhaA (452 aa).

Transmembrane regions (helical) follow at residues 27 to 47 (FLHI…TALI), 78 to 98 (LHFW…GMEI), 114 to 134 (ILPI…YLSF), 141 to 161 (IYGW…ILAL), 172 to 192 (IILL…IAFF), 201 to 221 (GLAI…ISFA), 222 to 242 (SAWL…VTGI), 316 to 336 (PWVA…VSFA), 346 to 366 (FLIV…GILA), 388 to 408 (ILLI…VSML), and 421 to 441 (IGVL…GLIY).

This sequence belongs to the NhaA Na(+)/H(+) (TC 2.A.33) antiporter family.

It localises to the cell inner membrane. It carries out the reaction Na(+)(in) + 2 H(+)(out) = Na(+)(out) + 2 H(+)(in). Na(+)/H(+) antiporter that extrudes sodium in exchange for external protons. This is Na(+)/H(+) antiporter NhaA from Bartonella bacilliformis (strain ATCC 35685 / KC583 / Herrer 020/F12,63).